We begin with the raw amino-acid sequence, 56 residues long: Small ribosomal subunit protein uS14A (56 aa).

2 residues coordinate Zn(2+): C21 and C24. Phosphoserine is present on S25. C39 and C42 together coordinate Zn(2+).

It belongs to the universal ribosomal protein uS14 family. As to quaternary structure, component of the small ribosomal subunit (SSU). Mature yeast ribosomes consist of a small (40S) and a large (60S) subunit. The 40S small subunit contains 1 molecule of ribosomal RNA (18S rRNA) and 33 different proteins (encoded by 57 genes). The large 60S subunit contains 3 rRNA molecules (25S, 5.8S and 5S rRNA) and 46 different proteins (encoded by 81 genes). Zn(2+) serves as cofactor.

It localises to the cytoplasm. Component of the ribosome, a large ribonucleoprotein complex responsible for the synthesis of proteins in the cell. The small ribosomal subunit (SSU) binds messenger RNAs (mRNAs) and translates the encoded message by selecting cognate aminoacyl-transfer RNA (tRNA) molecules. The large subunit (LSU) contains the ribosomal catalytic site termed the peptidyl transferase center (PTC), which catalyzes the formation of peptide bonds, thereby polymerizing the amino acids delivered by tRNAs into a polypeptide chain. The nascent polypeptides leave the ribosome through a tunnel in the LSU and interact with protein factors that function in enzymatic processing, targeting, and the membrane insertion of nascent chains at the exit of the ribosomal tunnel. The polypeptide is Small ribosomal subunit protein uS14A (Saccharomyces cerevisiae (strain ATCC 204508 / S288c) (Baker's yeast)).